Consider the following 175-residue polypeptide: Alkyl hydroperoxide reductase AhpD (175 aa).

C131 (proton donor) is an active-site residue. The cysteines at positions 131 and 134 are disulfide-linked. C134 acts as the Cysteine sulfenic acid (-SOH) intermediate in catalysis.

The protein belongs to the AhpD family.

The catalysed reaction is N(6)-[(R)-dihydrolipoyl]-L-lysyl-[lipoyl-carrier protein] + a hydroperoxide = N(6)-[(R)-lipoyl]-L-lysyl-[lipoyl-carrier protein] + an alcohol + H2O. Antioxidant protein with alkyl hydroperoxidase activity. Required for the reduction of the AhpC active site cysteine residues and for the regeneration of the AhpC enzyme activity. This Brucella melitensis biotype 1 (strain ATCC 23456 / CCUG 17765 / NCTC 10094 / 16M) protein is Alkyl hydroperoxide reductase AhpD.